Reading from the N-terminus, the 347-residue chain is UPF0284 protein YN1551_0030 (347 aa).

This sequence belongs to the UPF0284 family.

This Saccharolobus islandicus (strain Y.N.15.51 / Yellowstone #2) (Sulfolobus islandicus) protein is UPF0284 protein YN1551_0030.